A 127-amino-acid polypeptide reads, in one-letter code: Competence protein ComGF (127 aa).

The transformation pili are flexible filaments, consisting mainly of the major pilin ComGC and smaller amounts of the minor pilins, including at least ComGD, ComGF and ComGG. Interacts with ComGD. Interacts with ComGG.

The protein resides in the cell membrane. It localises to the fimbrium. Functionally, required for formation of the type IV-like pilus (T4P) that plays a role in transformation. Involved in transformation. Transformation pili are dynamically extended and retracted, perhaps thereby promoting DNA uptake and transformation. Required for transformation and DNA binding. This Bacillus subtilis (strain 168) protein is Competence protein ComGF (comGF).